A 2282-amino-acid chain; its full sequence is MIEINEYIKKLGGDKNIEKILIANNGIAAVKAIRSVRKWAYTNFGNERAIKFVVMATPEDMKANAEYIRMADQILQVPGGSNNNNYANVDIIVDFAERAGVQAVWAGWGHASENPRLPDLLSKTETGIVFIGPPAKAMADLGDKIASTIVAQSARVACVPWSGSGLKVDYSECNGVPSEIYGRACINSVEEARECAQRVGFPAMIKASEGGGGKGIRKVTSMEDLESSFRQVQNEVPGSPIFFMKLVSNARHLEVQIVADRHGEAISLNGRDCSVQRRHQKIIEEGPAIAPTPQVWEEMERAAVRLVKEVGYVGAGTVEYLFAEGEYYFLELNPRLQVEHPVTEQITGVNLPATQLQIAMGIPLHRIPDIRKLYGRTGDDLYGDSMIDLHDFTKRNPPAGHCIAVRITGENPDEGFKPTSGQIHELTFRSTPNIWGYFSVGAKGGLHEYADSQFGHIFANGATREEARKTIILGLKEISIRGDIRTPVEYIIHLLESKDFKENHIHTGWLDQLISEKIQTKKPETMIVVLCGAIYKASTIFSTKIQEFSNQLSNGQLPSLELLNNSLPIELIYNNVKYQFEVSRTGINNYSVCLKNDKSAVSIDSSVIMLSDSGLLILLNGSTHVCYGREDVIGLSLMIDSKTCVFSQEYDPSILRTSSPGKLVRYLVDDGSLVVKGTPFAEIEVMKMYMPLLVPEKGIIKFVLTEGSVMAPGAIIANLELSDQSSIQKSTVFTGSLTKMSPPTLIGNKPHQLLNYTLGKISNVLCGYESNDLNQLLNDTIKQLSNQKLPLFEFKEQLSIVQSRIPQSLFKLINDELNKFEFNNDDDDEDDSELFNSKNLQLSISLYLNKLLLENEQLSIAIQLLIKPIILLAEKYNDGVSFAAINIFKNYLEEFIQIETNLQNKNIQTVLKSIRPTYKDNISKVVDIAQSLHPQSKKYKFILLLLNKIQEQGLVCDFVEQFKKLSSLGGNCMEISLKAKHIMVHSQLPSNKQRSNDLINSLKSILNVNNEQQQQVDEKVQDNKDEKISKLSKQTNEISDILIPMFFNESNNDDDIRKLAMEVYVRHSYRSYYVEDTKVTLSNDEGSSGFSFIEWHFYINLPQQSNLGGSNSGSPTYGSPLIRSISSSGGSSGGSGFQISPRPSMSIFNGLSMLRTDSTDSLTAMEDQTKLRYGMMVFFENEKKFEEKLPLILTRYNEENNKKSQLSLSPNESTDILSVIISIYPESISQENQAISSFQSILKGYIKELSIARIRRITFICCGGDEGKPLKYFTFRERHMYMEDPIFRHIEPAMAYHLEVRKLSNFDITHVPTTSQRIHLYYAQEKGKKETDPDADRSFFVRSVIRYSDLYGHSNEIKVDILLSQIETLLSESIESLEIAMSNKKYEKAQNHSIFLNVMPEVMFDEKMIGYVVQEIGDRLGKRLWKLRVGRVEVRGRIRKGDGLIPVRFFVQNPTGYAFQVQCYYEQQNSIGQMVFAVVPGSSKGSWEGLPVDTPYPIMDAVQRNRFKAQRLDTTYCYDYPDLFREAMQNIWMEFMESNKTNPVKVYPSSRGVLESVELILPSTINTDFPPSIPLDQLPEESKPKLEETYRPIGYNDIGMVAWRMTFYTPEYPLGRQAIVIANDITHQIGSFGPQEDMLFKLASELARKEKIPRIYLSSNSGARIGLADEIKSKFKVTWNVPSDPTKGIKNLYLTNNDYQALKDSVIAYQDTTDKDKWIIHDIIGQKNGIGVENLSWSGLIAGETSQAYNEIFTITLVSGRSVGIGAYLVRLGQRTIQNDAPIILTGASALNKVLGKEVYESNQQLGGSQIMYPNGVSHIIVNDELRGITNVLQWLSFVPKSGGEMVPIISPIDSPHRDIEFDPSNSINGKCDTRHLIAGLQSELDPNYWISGMFDKDSFMETLAGWANTVITGRARLGGIPVGIIAVETKSVEKIIPADPANPLSYEQVNTQAGQVWYPDSSFKTAQAIADFNNGEELPLMILANWRGFSGGMRDMFDEILKFGSMIVDNLRNYKQPVMVYIPPFAELRGGAWVVLDSTINLDMMEMYCSEEGRGGVLEPNGIAEIKYRDPELIKTMHRLDPKLIEWDKSIPIGVSVNGLDQSQKTIKSQIQQREKELLGIYQQIAIKFADLHDTPGRMKAKGVIKQMVPWKSARSFFYDRIKRRLFEEDKLKLIDKSHPGLNRQSKLNLLETWIKQILGNNQSVDYHQNDKLISSTIESNSHIINDKIIDLSKQYAINQILNFVQSDSESIVDGFQNLLPFISTQQKEFLFESLKKDLNK.

In terms of domain architecture, Biotin carboxylation spans 16 to 515 (NIEKILIANN…HTGWLDQLIS (500 aa)). The ATP-grasp domain occupies 170-360 (YSECNGVPSE…LPATQLQIAM (191 aa)). Residue 196-253 (AQRVGFPAMIKASEGGGGKGIRKVTSMEDLESSFRQVQNEVPGSPIFFMKLVSNARHL) participates in ATP binding. Residues E319, E331, and N333 each contribute to the Mn(2+) site. R335 is an active-site residue. The Biotinyl-binding domain occupies 646-720 (FSQEYDPSIL…APGAIIANLE (75 aa)). K687 carries the N6-biotinyllysine modification. A compositionally biased stretch (low complexity) spans 1109–1129 (GSNSGSPTYGSPLIRSISSSG). The interval 1109 to 1141 (GSNSGSPTYGSPLIRSISSSGGSSGGSGFQISP) is disordered. The CoA carboxyltransferase N-terminal domain occupies 1495 to 1851 (PYPIMDAVQR…SGGEMVPIIS (357 aa)). The tract at residues 1495-2178 (PYPIMDAVQR…EEDKLKLIDK (684 aa)) is carboxyltransferase. CoA-binding residues include R1761, K2068, and R2070. Positions 1852–2178 (PIDSPHRDIE…EEDKLKLIDK (327 aa)) constitute a CoA carboxyltransferase C-terminal domain.

Biotin serves as cofactor. Requires Mn(2+) as cofactor.

It localises to the cytoplasm. The enzyme catalyses hydrogencarbonate + acetyl-CoA + ATP = malonyl-CoA + ADP + phosphate + H(+). The catalysed reaction is N(6)-biotinyl-L-lysyl-[protein] + hydrogencarbonate + ATP = N(6)-carboxybiotinyl-L-lysyl-[protein] + ADP + phosphate + H(+). The protein operates within lipid metabolism; malonyl-CoA biosynthesis; malonyl-CoA from acetyl-CoA: step 1/1. In terms of biological role, catalyzes the rate-limiting reaction in the biogenesis of long-chain fatty acids. Carries out three functions: biotin carboxyl carrier protein, biotin carboxylase and carboxyltransferase. In Dictyostelium discoideum (Social amoeba), this protein is Acetyl-CoA carboxylase (accA).